The following is a 420-amino-acid chain: CinA-like protein (420 aa).

Belongs to the CinA family.

This is CinA-like protein from Chlorobium phaeobacteroides (strain BS1).